The chain runs to 78 residues: Acyl carrier protein AcpP (78 aa).

Positions 2 to 77 (SDTAERVKKI…DAVKYIDKAS (76 aa)) constitute a Carrier domain. Serine 37 is subject to O-(pantetheine 4'-phosphoryl)serine.

Belongs to the acyl carrier protein (ACP) family. 4'-phosphopantetheine is transferred from CoA to a specific serine of apo-ACP by AcpS. This modification is essential for activity because fatty acids are bound in thioester linkage to the sulfhydryl of the prosthetic group.

The protein resides in the cytoplasm. It participates in lipid metabolism; fatty acid biosynthesis. Functionally, carrier of the growing fatty acid chain in fatty acid biosynthesis. This Mesorhizobium japonicum (strain LMG 29417 / CECT 9101 / MAFF 303099) (Mesorhizobium loti (strain MAFF 303099)) protein is Acyl carrier protein AcpP.